A 192-amino-acid chain; its full sequence is Fe/S biogenesis protein NfuA (192 aa).

[4Fe-4S] cluster contacts are provided by Cys150 and Cys153.

This sequence belongs to the NfuA family. As to quaternary structure, homodimer. [4Fe-4S] cluster is required as a cofactor.

Involved in iron-sulfur cluster biogenesis. Binds a 4Fe-4S cluster, can transfer this cluster to apoproteins, and thereby intervenes in the maturation of Fe/S proteins. Could also act as a scaffold/chaperone for damaged Fe/S proteins. The polypeptide is Fe/S biogenesis protein NfuA (Buchnera aphidicola subsp. Acyrthosiphon pisum (strain 5A)).